The primary structure comprises 839 residues: DNA-directed RNA polymerase YonO (839 aa).

Mg(2+) contacts are provided by aspartate 535, aspartate 537, and aspartate 539.

It belongs to the YRH RNA polymerase family. A divalent metal cation serves as cofactor.

The catalysed reaction is RNA(n) + a ribonucleoside 5'-triphosphate = RNA(n+1) + diphosphate. A single subunit DNA-dependent RNA polymerase (RNAP) that catalyzes the transcription of DNA into RNA using the four ribonucleoside triphosphates (rNTPs) as substrates. The enzyme is more highly processive than the multisubunit RNAP from E.coli but is considerably more error-prone. It has no detectable proof-reading function but can perform pyrophosphorolysis. Probably transcribes the late genes of the SPbeta phage starting from yonK. This chain is DNA-directed RNA polymerase YonO (yonO), found in Bacillus pumilus (Bacillus mesentericus).